Reading from the N-terminus, the 403-residue chain is Phosphopentomutase (403 aa).

Mn(2+)-binding residues include Asp-13, Asp-298, His-303, Asp-339, His-340, and His-351.

Belongs to the phosphopentomutase family. It depends on Mn(2+) as a cofactor.

It is found in the cytoplasm. The enzyme catalyses 2-deoxy-alpha-D-ribose 1-phosphate = 2-deoxy-D-ribose 5-phosphate. It catalyses the reaction alpha-D-ribose 1-phosphate = D-ribose 5-phosphate. It functions in the pathway carbohydrate degradation; 2-deoxy-D-ribose 1-phosphate degradation; D-glyceraldehyde 3-phosphate and acetaldehyde from 2-deoxy-alpha-D-ribose 1-phosphate: step 1/2. Its function is as follows. Isomerase that catalyzes the conversion of deoxy-ribose 1-phosphate (dRib-1-P) and ribose 1-phosphate (Rib-1-P) to deoxy-ribose 5-phosphate (dRib-5-P) and ribose 5-phosphate (Rib-5-P), respectively. The polypeptide is Phosphopentomutase (Streptococcus pyogenes serotype M5 (strain Manfredo)).